The chain runs to 200 residues: Elongation factor Ts (200 aa).

An involved in Mg(2+) ion dislocation from EF-Tu region spans residues Thr82–Val85.

This sequence belongs to the EF-Ts family.

Its subcellular location is the cytoplasm. Associates with the EF-Tu.GDP complex and induces the exchange of GDP to GTP. It remains bound to the aminoacyl-tRNA.EF-Tu.GTP complex up to the GTP hydrolysis stage on the ribosome. This chain is Elongation factor Ts, found in Solidesulfovibrio magneticus (strain ATCC 700980 / DSM 13731 / RS-1) (Desulfovibrio magneticus).